The following is a 317-amino-acid chain: Protoheme IX farnesyltransferase (317 aa).

The next 9 membrane-spanning stretches (helical) occupy residues P43–T63, P65–A85, A119–P139, I140–L160, I168–G188, V195–F215, L238–V258, W261–V281, and A292–V312.

The protein belongs to the UbiA prenyltransferase family. Protoheme IX farnesyltransferase subfamily. As to quaternary structure, interacts with CtaA.

The protein resides in the cell membrane. It catalyses the reaction heme b + (2E,6E)-farnesyl diphosphate + H2O = Fe(II)-heme o + diphosphate. It participates in porphyrin-containing compound metabolism; heme O biosynthesis; heme O from protoheme: step 1/1. In terms of biological role, converts heme B (protoheme IX) to heme O by substitution of the vinyl group on carbon 2 of heme B porphyrin ring with a hydroxyethyl farnesyl side group. The protein is Protoheme IX farnesyltransferase of Desulforudis audaxviator (strain MP104C).